We begin with the raw amino-acid sequence, 399 residues long: La protein 2 (399 aa).

The 104-residue stretch at 3-106 folds into the HTH La-type RNA-binding domain; sequence SSFNEETAKK…GRGTKLSKPE (104 aa). The region spanning 115–192 is the RRM domain; the sequence is RTLAASPFEY…ADLVLIPKSD (78 aa). The region spanning 269 to 399 is the xRRM domain; that stretch reads SLCKDNTDQL…QPTKKARKEP (131 aa). Positions 367-399 are disordered; it reads AELEGGKEGHKKEKGKDECFENVQPTKKARKEP. Residues 370–385 show a composition bias toward basic and acidic residues; it reads EGGKEGHKKEKGKDEC.

Expressed ubiquitously (at protein level).

It localises to the nucleus. It is found in the nucleoplasm. The protein resides in the nucleolus. In terms of biological role, binds to the 3' poly(U) terminus of nascent RNA polymerase III transcripts, protecting them from exonuclease digestion and facilitating their folding and maturation. The protein is La protein 2 (LA2) of Arabidopsis thaliana (Mouse-ear cress).